The following is a 439-amino-acid chain: ATP-dependent RNA helicase RhlB (439 aa).

The Q motif signature appears at Gln9 to Ala37. The region spanning Leu40–Val219 is the Helicase ATP-binding domain. Position 53–60 (Ala53–Thr60) interacts with ATP. The DEAD box signature appears at Asp165 to Asp168. In terms of domain architecture, Helicase C-terminal spans Lys243–Leu390. A disordered region spans residues Pro395–Pro439. Residues Ser425–Pro439 are compositionally biased toward basic residues.

Belongs to the DEAD box helicase family. RhlB subfamily. Component of the RNA degradosome, which is a multiprotein complex involved in RNA processing and mRNA degradation.

The protein resides in the cytoplasm. The enzyme catalyses ATP + H2O = ADP + phosphate + H(+). In terms of biological role, DEAD-box RNA helicase involved in RNA degradation. Has RNA-dependent ATPase activity and unwinds double-stranded RNA. This Shewanella sp. (strain MR-4) protein is ATP-dependent RNA helicase RhlB.